The primary structure comprises 336 residues: Tetraacyldisaccharide 4'-kinase (336 aa).

60 to 67 (TVGGTGKT) lines the ATP pocket.

The protein belongs to the LpxK family.

It carries out the reaction a lipid A disaccharide + ATP = a lipid IVA + ADP + H(+). Its pathway is glycolipid biosynthesis; lipid IV(A) biosynthesis; lipid IV(A) from (3R)-3-hydroxytetradecanoyl-[acyl-carrier-protein] and UDP-N-acetyl-alpha-D-glucosamine: step 6/6. Its function is as follows. Transfers the gamma-phosphate of ATP to the 4'-position of a tetraacyldisaccharide 1-phosphate intermediate (termed DS-1-P) to form tetraacyldisaccharide 1,4'-bis-phosphate (lipid IVA). The chain is Tetraacyldisaccharide 4'-kinase from Pseudomonas entomophila (strain L48).